Consider the following 254-residue polypeptide: Triosephosphate isomerase (254 aa).

Residue 12-14 (NWK) participates in substrate binding. Histidine 99 functions as the Electrophile in the catalytic mechanism. Catalysis depends on glutamate 169, which acts as the Proton acceptor. Substrate-binding positions include glycine 175, serine 214, and 235–236 (GG).

The protein belongs to the triosephosphate isomerase family. In terms of assembly, homodimer.

The protein localises to the cytoplasm. The enzyme catalyses D-glyceraldehyde 3-phosphate = dihydroxyacetone phosphate. It participates in carbohydrate biosynthesis; gluconeogenesis. It functions in the pathway carbohydrate degradation; glycolysis; D-glyceraldehyde 3-phosphate from glycerone phosphate: step 1/1. Its function is as follows. Involved in the gluconeogenesis. Catalyzes stereospecifically the conversion of dihydroxyacetone phosphate (DHAP) to D-glyceraldehyde-3-phosphate (G3P). The sequence is that of Triosephosphate isomerase from Xanthobacter autotrophicus (strain ATCC BAA-1158 / Py2).